A 185-amino-acid polypeptide reads, in one-letter code: Early nodulin-like protein 17 (185 aa).

Positions 1 to 21 (MARRDQLVSFLCFFLIVSAVA) are cleaved as a signal peptide. A Phytocyanin domain is found at 37–137 (KQYVVGGRSG…GQRLMINVDS (101 aa)). N-linked (GlcNAc...) asparagine glycans are attached at residues asparagine 79 and asparagine 94. The cysteines at positions 93 and 125 are disulfide-linked. A disordered region spans residues 136–155 (DSAPSPSPSPSPAPQEAATA). Serine 156 is lipidated: GPI-anchor amidated serine. Positions 157 to 185 (AATSSSAATAAHALLLAAMAMMGLILGEW) are cleaved as a propeptide — removed in mature form.

It belongs to the early nodulin-like (ENODL) family. In terms of tissue distribution, expressed ubiquitously. Accumulates mainly in anthers, stigmas and ovaries.

The protein resides in the cell membrane. Its function is as follows. May act as a carbohydrate transporter. Required for male fertility and seed yield. The chain is Early nodulin-like protein 17 from Oryza sativa subsp. japonica (Rice).